We begin with the raw amino-acid sequence, 361 residues long: uncharacterized protein (361 aa).

Positions 1-10 are enriched in basic residues; the sequence is MRRYLKKAKP. Disordered stretches follow at residues 1–82 and 94–147; these read MRRY…SSFH and ALSH…VNTS. Basic and acidic residues-rich tracts occupy residues 44-57 and 120-134; these read KEKN…KYEN and FTKK…ESEL. Over residues 135–147 the composition is skewed to polar residues; it reads QTRSSPPLPVNTS. Residues 295–349 adopt a coiled-coil conformation; sequence NILTMDEQIQRLKEAIASEKLQQEERSQIIKSLMEEELEINEQEEKIKHSFIDLD.

The protein resides in the cytoplasm. The protein localises to the nucleus. This is an uncharacterized protein from Schizosaccharomyces pombe (strain 972 / ATCC 24843) (Fission yeast).